The sequence spans 368 residues: Heme A synthase (368 aa).

The next 5 helical transmembrane spans lie at 14-34 (AVRI…LVGG), 104-124 (VIGI…AIGP), 129-149 (ALWI…WMVA), 161-181 (VRLA…VWTL), and 200-220 (ALAL…VAGL). Heme is bound at residue His264. The next 3 membrane-spanning stretches (helical) occupy residues 266–283 (MLAY…IDAL), 296–316 (FLAL…AAPI), and 318–338 (LALV…LQAE). His322 is a binding site for heme.

This sequence belongs to the COX15/CtaA family. Type 2 subfamily. In terms of assembly, interacts with CtaB. Heme b serves as cofactor.

The protein localises to the cell membrane. It catalyses the reaction Fe(II)-heme o + 2 A + H2O = Fe(II)-heme a + 2 AH2. The protein operates within porphyrin-containing compound metabolism; heme A biosynthesis; heme A from heme O: step 1/1. Functionally, catalyzes the conversion of heme O to heme A by two successive hydroxylations of the methyl group at C8. The first hydroxylation forms heme I, the second hydroxylation results in an unstable dihydroxymethyl group, which spontaneously dehydrates, resulting in the formyl group of heme A. In Rhodopseudomonas palustris (strain ATCC BAA-98 / CGA009), this protein is Heme A synthase.